A 536-amino-acid chain; its full sequence is MSFTNNTSSVDTSLSSSASSSIPASSSSAAASTSLSSSSVIPSSSSSMLSSSSATAISSSSSSSPLSSSSFTSPASSSFITSLVSSSSQQSSSSSASLTSSSSATLTSSSSASPTSSSSSHALSSSSSSLVASSSSSGMSSSSLSHSSSVPSSSSSYHSSSMTTSGLSSSASIVSSTYRDGPSIITLVSTSYVSEVVTPTTTNNWNSSSSFTSSTSSTPISSSYSSSGTLPSKSNKSSNHVGVVVGCSVAIPVGVVLILIGLGIFLWKRHQRSKRIKAERMQEVEEYGFNPNQPSNFRSPNRAPSTNNRYRGWNGSPTPAAGNNTNGRPVAPRPSAGAGGANPPAASQPGLLGGSSNSAGPIAAATAAGVGADASDAANTGGSFTRPQGARMVRPIGNPPDLSASNEAEATMPPSNGSNFSEGLSASPFESGPAVGAAGAAAEAAEHSGSGSDSYPEGPLATIPESDSESMASDLAGESSYGSRAALSSRSQSNLLSPTSTGASNQPNYSPFADNPSSSNVSIPRSSSEARRLNLF.

Disordered stretches follow at residues 1-76 (MSFT…SPAS) and 204-237 (NWNSSSSFTSSTSSTPISSSYSSSGTLPSKSNKS). Composition is skewed to low complexity over residues 7-76 (TSSV…SPAS) and 204-234 (NWNSSSSFTSSTSSTPISSSYSSSGTLPSKS). A helical transmembrane segment spans residues 247–267 (CSVAIPVGVVLILIGLGIFLW). 2 disordered regions span residues 287–354 (YGFN…LLGG) and 373–536 (DASD…LNLF). Positions 290-326 (NPNQPSNFRSPNRAPSTNNRYRGWNGSPTPAAGNNTN) are enriched in polar residues. The segment covering 327–350 (GRPVAPRPSAGAGGANPPAASQPG) has biased composition (low complexity). A helical transmembrane segment spans residues 351–371 (LLGGSSNSAGPIAAATAAGVG). The span at 403-424 (SASNEAEATMPPSNGSNFSEGL) shows a compositional bias: polar residues. Low complexity predominate over residues 430 to 454 (ESGPAVGAAGAAAEAAEHSGSGSDS). Over residues 480–509 (SYGSRAALSSRSQSNLLSPTSTGASNQPNY) the composition is skewed to polar residues. A compositionally biased stretch (low complexity) spans 517 to 527 (SSSNVSIPRSS).

The protein localises to the membrane. This is an uncharacterized protein from Schizosaccharomyces pombe (strain 972 / ATCC 24843) (Fission yeast).